The chain runs to 289 residues: Ribosomal RNA small subunit methyltransferase A (289 aa).

6 residues coordinate S-adenosyl-L-methionine: N21, L23, G48, E69, D94, and N120.

This sequence belongs to the class I-like SAM-binding methyltransferase superfamily. rRNA adenine N(6)-methyltransferase family. RsmA subfamily.

The protein localises to the cytoplasm. It carries out the reaction adenosine(1518)/adenosine(1519) in 16S rRNA + 4 S-adenosyl-L-methionine = N(6)-dimethyladenosine(1518)/N(6)-dimethyladenosine(1519) in 16S rRNA + 4 S-adenosyl-L-homocysteine + 4 H(+). Functionally, specifically dimethylates two adjacent adenosines (A1518 and A1519) in the loop of a conserved hairpin near the 3'-end of 16S rRNA in the 30S particle. May play a critical role in biogenesis of 30S subunits. The protein is Ribosomal RNA small subunit methyltransferase A of Haemophilus ducreyi (strain 35000HP / ATCC 700724).